The chain runs to 507 residues: Histidine ammonia-lyase (507 aa).

Positions 141–143 (ASG) form a cross-link, 5-imidazolinone (Ala-Gly). Ser-142 carries the 2,3-didehydroalanine (Ser) modification.

It belongs to the PAL/histidase family. In terms of processing, contains an active site 4-methylidene-imidazol-5-one (MIO), which is formed autocatalytically by cyclization and dehydration of residues Ala-Ser-Gly.

It is found in the cytoplasm. The enzyme catalyses L-histidine = trans-urocanate + NH4(+). Its pathway is amino-acid degradation; L-histidine degradation into L-glutamate; N-formimidoyl-L-glutamate from L-histidine: step 1/3. The polypeptide is Histidine ammonia-lyase (Burkholderia ambifaria (strain ATCC BAA-244 / DSM 16087 / CCUG 44356 / LMG 19182 / AMMD) (Burkholderia cepacia (strain AMMD))).